An 86-amino-acid chain; its full sequence is Translation machinery-associated protein 10 (86 aa).

Phosphoserine is present on residues Ser-28 and Ser-79. The interval 63–86 (NKTRRGSNSQNNERRLSDLQQYHI) is disordered.

The protein belongs to the STF2 family. Associates with ribosomes.

It is found in the cytoplasm. Its subcellular location is the nucleus. Functionally, may be involved in inhibition of the reverse ATPase reaction of mitochondrial F(1)F(0)-type ATP synthase. The chain is Translation machinery-associated protein 10 from Saccharomyces cerevisiae (strain ATCC 204508 / S288c) (Baker's yeast).